The sequence spans 360 residues: Phospho-N-acetylmuramoyl-pentapeptide-transferase (360 aa).

Over Met-1–Arg-25 the chain is Periplasmic. The helical transmembrane segment at Ala-26 to Ala-46 threads the bilayer. The Cytoplasmic portion of the chain corresponds to Arg-47–Thr-71. A helical membrane pass occupies residues Pro-72–Tyr-92. Residue Pro-93 is a topological domain, periplasmic. The helical transmembrane segment at Ser-94–Val-114 threads the bilayer. Topologically, residues Asp-115–Arg-131 are cytoplasmic. A helical transmembrane segment spans residues Trp-132 to Gly-152. The Periplasmic portion of the chain corresponds to Lys-153 to Asp-167. A helical transmembrane segment spans residues Val-168 to Gly-188. The Cytoplasmic portion of the chain corresponds to Asn-189–Asp-198. Residues Gly-199–Thr-219 traverse the membrane as a helical segment. The Periplasmic segment spans residues Gly-220 to His-235. Residues Ala-236–Phe-256 form a helical membrane-spanning segment. The Cytoplasmic segment spans residues Asn-257 to Gln-262. Residues Val-263 to Leu-283 traverse the membrane as a helical segment. The Periplasmic portion of the chain corresponds to Leu-284–Glu-287. The chain crosses the membrane as a helical span at residues Phe-288–Val-308. The Cytoplasmic segment spans residues Gly-309–Arg-337. The chain crosses the membrane as a helical span at residues Val-338 to Lys-358. At Val-359–Arg-360 the chain is on the periplasmic side.

The protein belongs to the glycosyltransferase 4 family. MraY subfamily. Mg(2+) serves as cofactor.

Its subcellular location is the cell inner membrane. The catalysed reaction is UDP-N-acetyl-alpha-D-muramoyl-L-alanyl-gamma-D-glutamyl-meso-2,6-diaminopimeloyl-D-alanyl-D-alanine + di-trans,octa-cis-undecaprenyl phosphate = di-trans,octa-cis-undecaprenyl diphospho-N-acetyl-alpha-D-muramoyl-L-alanyl-D-glutamyl-meso-2,6-diaminopimeloyl-D-alanyl-D-alanine + UMP. Its pathway is cell wall biogenesis; peptidoglycan biosynthesis. In terms of biological role, catalyzes the initial step of the lipid cycle reactions in the biosynthesis of the cell wall peptidoglycan: transfers peptidoglycan precursor phospho-MurNAc-pentapeptide from UDP-MurNAc-pentapeptide onto the lipid carrier undecaprenyl phosphate, yielding undecaprenyl-pyrophosphoryl-MurNAc-pentapeptide, known as lipid I. The chain is Phospho-N-acetylmuramoyl-pentapeptide-transferase from Salmonella agona (strain SL483).